The following is a 597-amino-acid chain: MLRTHDAGSLRESNAGQRVTLAGWVARRRDHGGVIFIDLRDASGVAQVVFREDAVLEQAHRLRAEFCVEVSGVVEVRPEGNANDEIATGQIEVNAAELKVLNESAPLPFQLDETAGEEARLRYRYLDLRREGPGNAIRLRSKANAAARSVLSGHEFVEVETPTLTRSTPEGARDFLVPARLQPGSFYALPQSPQLFKQLLMVAGMERYYQIARCYRDEDFRADRQPEFTQLDIEMSFVDQDDVIALAEEILVALWDLVGYRVPTPIDRITYAEAMRRYGSDKPDLRFGLELVECTDYFSETSFRVFQAPYVGAVVMPGGADQPRRTLDGWQEFAKQRGHKGLAYVLVGEDGTLGGPVAKNLSDAERDGLAAHVGANPGDCIFFSAGAAKSSRALLGSVRGEVAQRLGLIDPDAWAFTWVVDAPLFEPADDATAAGDVAVGSGAWTAVHHAFTSPKPESENTFDTDPGSALAYAYDIVCNGHEIGGGSIRIHRRDIQERVFQVMGISNEDAQEKFGFLLDAFAFGAPPHGGIAFGWDRVTALLAGTSSIREVIAFPKSGGGVDPLTDAPAPITAAQRKESGIDAKPEKAEKAGKPADA.

Glu170 provides a ligand contact to L-aspartate. The segment at 194–197 (QLFK) is aspartate. Arg216 lines the L-aspartate pocket. ATP contacts are provided by residues 216–218 (RDE) and Gln225. Residue His448 participates in L-aspartate binding. Glu482 is a binding site for ATP. Arg489 serves as a coordination point for L-aspartate. 534-537 (GWDR) provides a ligand contact to ATP. The tract at residues 558-597 (GGGVDPLTDAPAPITAAQRKESGIDAKPEKAEKAGKPADA) is disordered. Residues 575 to 597 (QRKESGIDAKPEKAEKAGKPADA) show a composition bias toward basic and acidic residues.

It belongs to the class-II aminoacyl-tRNA synthetase family. Type 1 subfamily. As to quaternary structure, homodimer.

The protein resides in the cytoplasm. It catalyses the reaction tRNA(Asx) + L-aspartate + ATP = L-aspartyl-tRNA(Asx) + AMP + diphosphate. Functionally, aspartyl-tRNA synthetase with relaxed tRNA specificity since it is able to aspartylate not only its cognate tRNA(Asp) but also tRNA(Asn). Reaction proceeds in two steps: L-aspartate is first activated by ATP to form Asp-AMP and then transferred to the acceptor end of tRNA(Asp/Asn). The polypeptide is Aspartate--tRNA(Asp/Asn) ligase (Mycobacteroides abscessus (strain ATCC 19977 / DSM 44196 / CCUG 20993 / CIP 104536 / JCM 13569 / NCTC 13031 / TMC 1543 / L948) (Mycobacterium abscessus)).